A 598-amino-acid polypeptide reads, in one-letter code: MTISLARYNFFISLELLKTLVAKGVKYFVLCPGSRSGPLALAAASLSKRKELTLITSIDERSAAFLALGISAASGQVSCVITTSGSAVANLLPAAVEADRSCHPLLFLTADRPLRLKECGANQAVNQQDFLKSVCRHFDESPKEGIHLISKERLTSLVGKSFEMASNIPGPVHINLAYEEPLHPCELDQKKVLDGWVIEGFLKGKITPTKDEVVKSFQSLKLLKLDPFSLGIIIVGPWRGKVKQLNSFRGALKKWQKLTGWPILADPLSGVENDQEGLINHWDLFFSIGLFEKIKEIQVLRLGPIPPSRELQTWLKKPGKFQLLITEGDSRNLDPIGGSTQFSEGFSCWVDKMLEVIPVKPAIDKKIVSKKLIKELIKYDLFIHDWLDKRLFRNGLITEPALARLLPRLLPESIPVMIASSSPIRDWLSYSGEGAFLRRCFGFRGASGIDGTLSMGMGLSIIMGRMVLVTGDLALLHDTNGWLFSKDKNISLIVIMIDNGGGGIFNQLNIDRIEEGDFEDIFLMPQQVCHLTLAKAYGLKYKQVACLDDLEKAIEWSFSLSTNVLIRVCTNSIEDHRLRVNLSDDLKKTLSENLSSFD.

This sequence belongs to the TPP enzyme family. MenD subfamily. As to quaternary structure, homodimer. Mg(2+) is required as a cofactor. The cofactor is Mn(2+). Requires thiamine diphosphate as cofactor.

The catalysed reaction is isochorismate + 2-oxoglutarate + H(+) = 5-enolpyruvoyl-6-hydroxy-2-succinyl-cyclohex-3-ene-1-carboxylate + CO2. Its pathway is quinol/quinone metabolism; 1,4-dihydroxy-2-naphthoate biosynthesis; 1,4-dihydroxy-2-naphthoate from chorismate: step 2/7. It functions in the pathway cofactor biosynthesis; phylloquinone biosynthesis. Catalyzes the thiamine diphosphate-dependent decarboxylation of 2-oxoglutarate and the subsequent addition of the resulting succinic semialdehyde-thiamine pyrophosphate anion to isochorismate to yield 2-succinyl-5-enolpyruvyl-6-hydroxy-3-cyclohexene-1-carboxylate (SEPHCHC). This is 2-succinyl-5-enolpyruvyl-6-hydroxy-3-cyclohexene-1-carboxylate synthase from Prochlorococcus marinus (strain NATL2A).